Consider the following 560-residue polypeptide: Dihydroxy-acid dehydratase (560 aa).

Cys50 contacts [2Fe-2S] cluster. Asp82 contributes to the Mg(2+) binding site. Residue Cys123 coordinates [2Fe-2S] cluster. Mg(2+)-binding residues include Asp124 and Lys125. Lys125 is modified (N6-carboxylysine). Cys195 is a [2Fe-2S] cluster binding site. Glu446 is a binding site for Mg(2+). The Proton acceptor role is filled by Ser472.

This sequence belongs to the IlvD/Edd family. As to quaternary structure, homodimer. Requires [2Fe-2S] cluster as cofactor. Mg(2+) serves as cofactor.

It carries out the reaction (2R)-2,3-dihydroxy-3-methylbutanoate = 3-methyl-2-oxobutanoate + H2O. It catalyses the reaction (2R,3R)-2,3-dihydroxy-3-methylpentanoate = (S)-3-methyl-2-oxopentanoate + H2O. Its pathway is amino-acid biosynthesis; L-isoleucine biosynthesis; L-isoleucine from 2-oxobutanoate: step 3/4. It functions in the pathway amino-acid biosynthesis; L-valine biosynthesis; L-valine from pyruvate: step 3/4. Functions in the biosynthesis of branched-chain amino acids. Catalyzes the dehydration of (2R,3R)-2,3-dihydroxy-3-methylpentanoate (2,3-dihydroxy-3-methylvalerate) into 2-oxo-3-methylpentanoate (2-oxo-3-methylvalerate) and of (2R)-2,3-dihydroxy-3-methylbutanoate (2,3-dihydroxyisovalerate) into 2-oxo-3-methylbutanoate (2-oxoisovalerate), the penultimate precursor to L-isoleucine and L-valine, respectively. This Leptothrix cholodnii (strain ATCC 51168 / LMG 8142 / SP-6) (Leptothrix discophora (strain SP-6)) protein is Dihydroxy-acid dehydratase.